Consider the following 163-residue polypeptide: NADH-quinone oxidoreductase subunit I (163 aa).

4Fe-4S ferredoxin-type domains follow at residues 53–83 and 94–123; these read LRRY…IEAG and VRYD…EGPN. Residues Cys63, Cys66, Cys69, Cys73, Cys103, Cys106, Cys109, and Cys113 each coordinate [4Fe-4S] cluster.

This sequence belongs to the complex I 23 kDa subunit family. NDH-1 is composed of 14 different subunits. Subunits NuoA, H, J, K, L, M, N constitute the membrane sector of the complex. Requires [4Fe-4S] cluster as cofactor.

It localises to the cell inner membrane. It catalyses the reaction a quinone + NADH + 5 H(+)(in) = a quinol + NAD(+) + 4 H(+)(out). Functionally, NDH-1 shuttles electrons from NADH, via FMN and iron-sulfur (Fe-S) centers, to quinones in the respiratory chain. The immediate electron acceptor for the enzyme in this species is believed to be ubiquinone. Couples the redox reaction to proton translocation (for every two electrons transferred, four hydrogen ions are translocated across the cytoplasmic membrane), and thus conserves the redox energy in a proton gradient. The sequence is that of NADH-quinone oxidoreductase subunit I from Agrobacterium fabrum (strain C58 / ATCC 33970) (Agrobacterium tumefaciens (strain C58)).